A 77-amino-acid polypeptide reads, in one-letter code: U8-lycotoxin-Ls1r (77 aa).

The first 20 residues, 1-20 (MKLIIFTGLVLFAIVSLIEA), serve as a signal peptide directing secretion. The propeptide occupies 21 to 26 (QAENEK).

It belongs to the neurotoxin 19 (CSTX) family. 08 (U8-Lctx) subfamily. Contains 4 disulfide bonds. In terms of tissue distribution, expressed by the venom gland.

It is found in the secreted. The polypeptide is U8-lycotoxin-Ls1r (Lycosa singoriensis (Wolf spider)).